A 332-amino-acid chain; its full sequence is Holliday junction branch migration complex subunit RuvB (332 aa).

The interval 1 to 182 (MNKNFIESNL…FAFTCRLEYY (182 aa)) is large ATPase domain (RuvB-L). ATP contacts are provided by residues leucine 21, arginine 22, glycine 63, lysine 66, threonine 67, threonine 68, 129–131 (EDF), arginine 172, tyrosine 182, and arginine 219. Threonine 67 is a Mg(2+) binding site. A small ATPAse domain (RuvB-S) region spans residues 183-253 (DPMILQKILL…VANRALTMLS (71 aa)). The segment at 256–332 (EKGLDEMDKK…YQHIVGSSQR (77 aa)) is head domain (RuvB-H). Residues arginine 311 and arginine 316 each coordinate DNA.

It belongs to the RuvB family. Homohexamer. Forms an RuvA(8)-RuvB(12)-Holliday junction (HJ) complex. HJ DNA is sandwiched between 2 RuvA tetramers; dsDNA enters through RuvA and exits via RuvB. An RuvB hexamer assembles on each DNA strand where it exits the tetramer. Each RuvB hexamer is contacted by two RuvA subunits (via domain III) on 2 adjacent RuvB subunits; this complex drives branch migration. In the full resolvosome a probable DNA-RuvA(4)-RuvB(12)-RuvC(2) complex forms which resolves the HJ.

Its subcellular location is the cytoplasm. The enzyme catalyses ATP + H2O = ADP + phosphate + H(+). In terms of biological role, the RuvA-RuvB-RuvC complex processes Holliday junction (HJ) DNA during genetic recombination and DNA repair, while the RuvA-RuvB complex plays an important role in the rescue of blocked DNA replication forks via replication fork reversal (RFR). RuvA specifically binds to HJ cruciform DNA, conferring on it an open structure. The RuvB hexamer acts as an ATP-dependent pump, pulling dsDNA into and through the RuvAB complex. RuvB forms 2 homohexamers on either side of HJ DNA bound by 1 or 2 RuvA tetramers; 4 subunits per hexamer contact DNA at a time. Coordinated motions by a converter formed by DNA-disengaged RuvB subunits stimulates ATP hydrolysis and nucleotide exchange. Immobilization of the converter enables RuvB to convert the ATP-contained energy into a lever motion, pulling 2 nucleotides of DNA out of the RuvA tetramer per ATP hydrolyzed, thus driving DNA branch migration. The RuvB motors rotate together with the DNA substrate, which together with the progressing nucleotide cycle form the mechanistic basis for DNA recombination by continuous HJ branch migration. Branch migration allows RuvC to scan DNA until it finds its consensus sequence, where it cleaves and resolves cruciform DNA. The chain is Holliday junction branch migration complex subunit RuvB from Protochlamydia amoebophila (strain UWE25).